The primary structure comprises 562 residues: MRVLLASLLIFGACWAGPVVNTNYGKVEGFEYGAAEVFLAIPFAKPPVDNLRFEKPEAPEPWEDVYQATQFRNDCTPHYRLVAQFSSYSGEDCLTLNVIKPKTIEKKLPVLFWVHGGGYEIGSGSQHGYEFFADRYTSQGVIVVTIQYRLGFMGFFSEGTSDAPGNYGLFDQAAALRFVKENIGNFGGDPDDITIWGYSAGAASVSQLTMSPYTHDLYSKAIIMSASSFVGWATGPNVIDTSKQLAEILGCPWPGAKECMKKKTLHEIFDAVETQGWTTGTIDILRWSPVIDGDYLPKNPENLINDAPIKPTLIGMSNKEGSYFATMNMGRVIADFGLSPEEIPKVDEDFISEIIDRKLLYNNRYGENRQKVWDQILDYYTKQGKPERDLNGFYVDRYAELLSDITFNVPILREITARVERKTPVWTYRFDHYNEQIWKKYIPEQAKGSPHANEYHYLFNMPVMAQIDFKKEPESWLQRDLIDMVVSFAKTGVPHIQDVEWRPVSDPDDVNFLNFQSSGVSVKHGLFQEPLDFWNNLREREGFDLVDPAYSKTTSNSEKDEL.

Positions 1 to 16 are cleaved as a signal peptide; sequence MRVLLASLLIFGACWA. An intrachain disulfide couples Cys-75 to Cys-93. Residue Ser-199 is the Acyl-ester intermediate of the active site. Cys-251 and Cys-259 are oxidised to a cystine. Residues Glu-320 and His-451 each act as charge relay system in the active site. Residues 559–562 carry the Prevents secretion from ER motif; it reads KDEL.

Belongs to the type-B carboxylesterase/lipase family. As to expression, expressed only in the intestine.

The protein localises to the endoplasmic reticulum lumen. The enzyme catalyses a carboxylic ester + H2O = an alcohol + a carboxylate + H(+). This is Gut esterase 1 (ges-1) from Caenorhabditis briggsae.